Consider the following 215-residue polypeptide: N-(5'-phosphoribosyl)anthranilate isomerase (215 aa).

It belongs to the TrpF family.

The enzyme catalyses N-(5-phospho-beta-D-ribosyl)anthranilate = 1-(2-carboxyphenylamino)-1-deoxy-D-ribulose 5-phosphate. Its pathway is amino-acid biosynthesis; L-tryptophan biosynthesis; L-tryptophan from chorismate: step 3/5. This Rippkaea orientalis (strain PCC 8801 / RF-1) (Cyanothece sp. (strain PCC 8801)) protein is N-(5'-phosphoribosyl)anthranilate isomerase.